The chain runs to 305 residues: Protoheme IX farnesyltransferase (305 aa).

9 helical membrane passes run 26 to 46 (VMSL…QPVN), 47 to 67 (PFVA…SGAL), 98 to 118 (LAVG…AANW), 119 to 139 (FAAG…TIWL), 147 to 167 (IVIG…CATG), 174 to 194 (LLMF…LALF), 220 to 240 (IFAY…TSVG), 243 to 263 (LYLA…WQIL), and 284 to 304 (LSLY…WVGG).

The protein belongs to the UbiA prenyltransferase family. Protoheme IX farnesyltransferase subfamily. In terms of assembly, interacts with CtaA.

It localises to the cell inner membrane. The enzyme catalyses heme b + (2E,6E)-farnesyl diphosphate + H2O = Fe(II)-heme o + diphosphate. The protein operates within porphyrin-containing compound metabolism; heme O biosynthesis; heme O from protoheme: step 1/1. Converts heme B (protoheme IX) to heme O by substitution of the vinyl group on carbon 2 of heme B porphyrin ring with a hydroxyethyl farnesyl side group. The protein is Protoheme IX farnesyltransferase of Paracoccus denitrificans (strain Pd 1222).